A 552-amino-acid polypeptide reads, in one-letter code: Ribosomal lysine N-methyltransferase 3 (552 aa).

The SET domain maps to 26 to 335 (SKCDIRESPL…QGQEIFNSYG (310 aa)). S-adenosyl-L-methionine is bound at residue Tyr-334. The segment at 399–432 (EDEEDEDGQAKSDNLSDDIESEEEEEEEEGDDSL) is disordered. The segment covering 413 to 432 (LSDDIESEEEEEEEEGDDSL) has biased composition (acidic residues).

Belongs to the class V-like SAM-binding methyltransferase superfamily.

It localises to the nucleus. Its function is as follows. S-adenosyl-L-methionine-dependent protein-lysine N-methyltransferase that monomethylates 60S ribosomal protein L42 (RPL42A and RPL42B) at 'Lys-40'. This is Ribosomal lysine N-methyltransferase 3 from Saccharomyces cerevisiae (strain ATCC 204508 / S288c) (Baker's yeast).